The primary structure comprises 210 residues: MIDFKMTKEGLILLIRDYQNLEEVLNEITSRVTQMGGFFAKGDRISLMIENHTKHSQDIPKIVSRLRELGLEVSQILVGSTIEGKENDVRVESRTTVESTGKVIKRNIRSGQTVVHSGDVIVFGNVNKGAEILAGGSVVVFGKAQGNIRAGLNEGEQAVVAALDLQTSLIQIAGFITHSKGEENVPSIAHVKGNRIVIEPFDRVDFERSE.

This sequence belongs to the MinC family. Interacts with MinD and FtsZ.

Functionally, cell division inhibitor that blocks the formation of polar Z ring septums. Rapidly oscillates between the poles of the cell to destabilize FtsZ filaments that have formed before they mature into polar Z rings. Prevents FtsZ polymerization. This chain is Probable septum site-determining protein MinC, found in Thermotoga neapolitana (strain ATCC 49049 / DSM 4359 / NBRC 107923 / NS-E).